The following is a 637-amino-acid chain: tRNA uridine 5-carboxymethylaminomethyl modification enzyme MnmG (637 aa).

FAD contacts are provided by residues 15–20 (GAGHAG), Val-127, and Ser-182. 274–288 (GPRYCPSIEDKVVRF) is an NAD(+) binding site. Residue Gln-371 participates in FAD binding.

It belongs to the MnmG family. In terms of assembly, homodimer. Heterotetramer of two MnmE and two MnmG subunits. The cofactor is FAD.

The protein resides in the cytoplasm. NAD-binding protein involved in the addition of a carboxymethylaminomethyl (cmnm) group at the wobble position (U34) of certain tRNAs, forming tRNA-cmnm(5)s(2)U34. The chain is tRNA uridine 5-carboxymethylaminomethyl modification enzyme MnmG from Heliobacterium modesticaldum (strain ATCC 51547 / Ice1).